A 397-amino-acid polypeptide reads, in one-letter code: Ribosomal RNA large subunit methyltransferase I (397 aa).

The 78-residue stretch at 2–79 folds into the PUA domain; that stretch reads TAAIYLVKGR…KEEINKAFFV (78 aa).

The protein belongs to the methyltransferase superfamily. RlmI family.

The protein localises to the cytoplasm. It carries out the reaction cytidine(1962) in 23S rRNA + S-adenosyl-L-methionine = 5-methylcytidine(1962) in 23S rRNA + S-adenosyl-L-homocysteine + H(+). Specifically methylates the cytosine at position 1962 (m5C1962) of 23S rRNA. The polypeptide is Ribosomal RNA large subunit methyltransferase I (Vibrio parahaemolyticus serotype O3:K6 (strain RIMD 2210633)).